We begin with the raw amino-acid sequence, 293 residues long: Protease HtpX (293 aa).

The next 2 membrane-spanning stretches (helical) occupy residues 4-24 (IALF…VLSL) and 34-54 (GLLI…LLMS). His-139 is a binding site for Zn(2+). Glu-140 is a catalytic residue. Residue His-143 coordinates Zn(2+). The next 2 helical transmembrane spans lie at 158–178 (VVNT…AGFL) and 193–213 (LIYF…ASII). Glu-222 contributes to the Zn(2+) binding site.

It belongs to the peptidase M48B family. Requires Zn(2+) as cofactor.

The protein localises to the cell inner membrane. The protein is Protease HtpX of Salmonella agona (strain SL483).